We begin with the raw amino-acid sequence, 305 residues long: tRNA dimethylallyltransferase 1 (305 aa).

10 to 17 (GPTASGKS) lines the ATP pocket. A substrate-binding site is contributed by 12–17 (TASGKS). The tract at residues 35–38 (DSLT) is interaction with substrate tRNA.

The protein belongs to the IPP transferase family. Monomer. Requires Mg(2+) as cofactor.

The catalysed reaction is adenosine(37) in tRNA + dimethylallyl diphosphate = N(6)-dimethylallyladenosine(37) in tRNA + diphosphate. Functionally, catalyzes the transfer of a dimethylallyl group onto the adenine at position 37 in tRNAs that read codons beginning with uridine, leading to the formation of N6-(dimethylallyl)adenosine (i(6)A). This Trichlorobacter lovleyi (strain ATCC BAA-1151 / DSM 17278 / SZ) (Geobacter lovleyi) protein is tRNA dimethylallyltransferase 1.